Here is a 129-residue protein sequence, read N- to C-terminus: MATVHYSRRPGTPPVTLTSSPSMDDVATPIPYLPTYAEAVADAPPPYRSRESLVFSPPLFPHVENGTTQQSYDCLDCAYDGIHRLQLAFLRIRKCCVPAFLILFGILTLTAVVVAIVAVFPEEPPNSTT.

The interval 1-25 is disordered; the sequence is MATVHYSRRPGTPPVTLTSSPSMDD. Residues 44-47 carry the PPXY motif motif; the sequence is PPPY. Residues 100-120 form a helical membrane-spanning segment; that stretch reads FLILFGILTLTAVVVAIVAVF.

The protein belongs to the varicellovirus ORF0 protein family. In terms of assembly, interacts with host ITCH; this interaction probably mediates ITCH degradation.

The protein localises to the host Golgi apparatus membrane. The chain is Membrane protein 0 from Homo sapiens (Human).